Here is a 577-residue protein sequence, read N- to C-terminus: Arginine--tRNA ligase (577 aa).

The short motif at 123–133 (PNLAKEMHVGH) is the 'HIGH' region element.

The protein belongs to the class-I aminoacyl-tRNA synthetase family. In terms of assembly, monomer.

The protein resides in the cytoplasm. It carries out the reaction tRNA(Arg) + L-arginine + ATP = L-arginyl-tRNA(Arg) + AMP + diphosphate. The chain is Arginine--tRNA ligase from Marinomonas sp. (strain MWYL1).